The chain runs to 26 residues: Coenzyme PQQ synthesis protein A (26 aa).

A cross-link (pyrroloquinoline quinone (Glu-Tyr)) is located at residues 16-20; the sequence is EINSY.

This sequence belongs to the PqqA family.

The protein operates within cofactor biosynthesis; pyrroloquinoline quinone biosynthesis. In terms of biological role, required for coenzyme pyrroloquinoline quinone (PQQ) biosynthesis. PQQ is probably formed by cross-linking a specific glutamate to a specific tyrosine residue and excising these residues from the peptide. This chain is Coenzyme PQQ synthesis protein A, found in Gluconacetobacter diazotrophicus (strain ATCC 49037 / DSM 5601 / CCUG 37298 / CIP 103539 / LMG 7603 / PAl5).